The chain runs to 370 residues: Peptide chain release factor 1 (370 aa).

Glutamine 237 carries the N5-methylglutamine modification. Basic and acidic residues predominate over residues 286-296 (ERQRSARDATR). The disordered stretch occupies residues 286 to 310 (ERQRSARDATRKSQVGTGDRSEKIR).

The protein belongs to the prokaryotic/mitochondrial release factor family. Post-translationally, methylated by PrmC. Methylation increases the termination efficiency of RF1.

It localises to the cytoplasm. Peptide chain release factor 1 directs the termination of translation in response to the peptide chain termination codons UAG and UAA. The polypeptide is Peptide chain release factor 1 (Anaeromyxobacter dehalogenans (strain 2CP-C)).